The sequence spans 425 residues: cAMP/cGMP-dependent 3',5'-cAMP/cGMP phosphodiesterase 7 (425 aa).

A signal peptide spans 1-17 (MKYLILILIFFIEINNG).

The protein belongs to the cyclic nucleotide phosphodiesterase class-II family.

It is found in the secreted. It localises to the extracellular space. The protein resides in the cell surface. It catalyses the reaction 3',5'-cyclic AMP + H2O = AMP + H(+). The enzyme catalyses 3',5'-cyclic GMP + H2O = GMP + H(+). With respect to regulation, inhibited by dithiotreitol (DTT). In terms of biological role, phosphodiesterase with dual cAMP/cGMP specificity. However, displays a preference for cAMP over cGMP. Seems to regulate cAMP/cGMP concentration especially during cell aggregation. In Dictyostelium discoideum (Social amoeba), this protein is cAMP/cGMP-dependent 3',5'-cAMP/cGMP phosphodiesterase 7 (pde7).